A 537-amino-acid polypeptide reads, in one-letter code: Cytochrome P450 86A8 (537 aa).

A helical transmembrane segment spans residues 3-23 (ISTALMILSAITAYFLWLTFI). Cys-458 is a binding site for heme.

This sequence belongs to the cytochrome P450 family. The cofactor is heme. In terms of tissue distribution, expressed in leaves, stems, flowers and siliques. Expressed at low levels in roots.

The protein localises to the membrane. The enzyme catalyses an organic molecule + reduced [NADPH--hemoprotein reductase] + O2 = an alcohol + oxidized [NADPH--hemoprotein reductase] + H2O + H(+). Its function is as follows. Catalyzes the omega-hydroxylation of various fatty acids (FA). Acts on saturated and unsaturated fatty acids with chain lengths from C12 to C18. May be involved in the biosynthesis of cutin in the epidermis which prevents post-genital organ fusions. Hydroxylated FAs may be important for trichome differentiation, establishment of apical dominance and senescence. This is Cytochrome P450 86A8 (CYP86A8) from Arabidopsis thaliana (Mouse-ear cress).